Here is a 394-residue protein sequence, read N- to C-terminus: Bifunctional enzyme Fae/Hps (394 aa).

A formaldehyde-activating enzyme region spans residues 1-162 (MEFRIGEALI…YEKDRSFHPF (162 aa)). The active-site Proton donor is the histidine 18. Substrate-binding residues include aspartate 20, leucine 49, lysine 67, threonine 69, and glutamine 84. Residues 163–394 (VGRKLTKLWD…TDQFRIMTDF (232 aa)) form a 3-hexulose-6-phosphate synthase region.

This sequence in the N-terminal section; belongs to the formaldehyde-activating enzyme family. In the C-terminal section; belongs to the HPS/KGPDC family. HPS subfamily.

The catalysed reaction is 5,6,7,8-tetrahydromethanopterin + formaldehyde = 5,10-methylenetetrahydromethanopterin + H2O. It catalyses the reaction D-ribulose 5-phosphate + formaldehyde = D-arabino-hex-3-ulose 6-phosphate. Its pathway is carbohydrate biosynthesis; D-ribose 5-phosphate biosynthesis. In terms of biological role, catalyzes the condensation of formaldehyde with tetrahydromethanopterin (H(4)MPT) to 5,10-methylenetetrahydromethanopterin. Functionally, catalyzes the reversible formation of ribulose-5-phosphate and formaldehyde from 3-hexulose-6-phosphate. The chain is Bifunctional enzyme Fae/Hps from Archaeoglobus fulgidus (strain ATCC 49558 / DSM 4304 / JCM 9628 / NBRC 100126 / VC-16).